A 199-amino-acid polypeptide reads, in one-letter code: Elongation factor Ts (199 aa).

The interval T81–V84 is involved in Mg(2+) ion dislocation from EF-Tu.

The protein belongs to the EF-Ts family.

The protein resides in the cytoplasm. Associates with the EF-Tu.GDP complex and induces the exchange of GDP to GTP. It remains bound to the aminoacyl-tRNA.EF-Tu.GTP complex up to the GTP hydrolysis stage on the ribosome. This is Elongation factor Ts from Thermotoga petrophila (strain ATCC BAA-488 / DSM 13995 / JCM 10881 / RKU-1).